We begin with the raw amino-acid sequence, 370 residues long: MRTTSVGVFKIVTKGPGDVSGLMAMIGSGAIDPKSILAVLGKTEGNGGVNDFTREYAVAALCTALAPQLGLSPEEVEQRIAFVMSGGTEGVLSPHITVFTRREVERRPAGLSGKRLSIGMAHTRDFLPEELGRAAQIAETAAAVKAAMADAGIADPADVHFVQIKCPLLTSDRVEAASARGNKTATTSAYGSMAYSRGASALGVAVALGETGSDISDGDVLRRYDLFSKVASTSAGIELMHNVVIVLGNSAASASEFEIGHAVMNDAIDAAAVTSALKCVGLGVAPQAEAGRELVNIFAKAEASPDGSVRGFRHTMLEDTDISSTRHARAAVGGLIAGLAGTGAVYVSGGAEHQGPAGGGPVAVIARLSD.

The segment at 1-106 (MRTTSVGVFK…TVFTRREVER (106 aa)) is RU A. Residues arginine 54 and 85–86 (SG) contribute to the substrate site. The interval 115 to 251 (RLSIGMAHTR…NVVIVLGNSA (137 aa)) is RU B. The active site involves lysine 165. Residues arginine 197 and 234 to 235 (SA) contribute to the substrate site. Serine 234 serves as the catalytic Nucleophile. Positions 257–370 (FEIGHAVMND…PVAVIARLSD (114 aa)) are RU C. Glutamate 302 contributes to the Mg(2+) binding site. Substrate-binding positions include arginine 329 and 348-349 (SG). Alanine 351, glutamine 354, glycine 355, proline 356, and glycine 359 together coordinate Mg(2+).

This sequence belongs to the cyclic amide hydrolase (CyAH) family. As to quaternary structure, homotetramer.

It carries out the reaction cyanurate + H2O = 1-carboxybiuret + H(+). Its pathway is xenobiotic degradation; atrazine degradation; biuret from cyanurate: step 1/1. With respect to regulation, inhibited by barbituric acid. Its function is as follows. Responsible for the hydrolysis of cyanuric acid, an intermediate formed during catabolism of s-triazine based compounds in herbicides such as atrazine and polymers such as melamine. Catalyzes the hydrolytic opening of the s-triazine ring of cyanuric acid (2,4,6-trihydroxy-s-triazine) to yield carbon dioxide and carboxybiuret, which spontaneously decarboxylates to biuret. This chain is Cyanuric acid amidohydrolase, found in Bradyrhizobium diazoefficiens (strain JCM 10833 / BCRC 13528 / IAM 13628 / NBRC 14792 / USDA 110).